The following is a 394-amino-acid chain: 1-deoxy-D-xylulose 5-phosphate reductoisomerase (394 aa).

NADPH is bound by residues Thr13, Gly14, Ser15, Ile16, and Asn127. 1-deoxy-D-xylulose 5-phosphate is bound at residue Lys128. Residue Glu129 participates in NADPH binding. Asp153 lines the Mn(2+) pocket. Residues Ser154, Glu155, Ser184, and His207 each coordinate 1-deoxy-D-xylulose 5-phosphate. Glu155 is a Mn(2+) binding site. Position 213 (Gly213) interacts with NADPH. Positions 220, 225, 226, and 229 each coordinate 1-deoxy-D-xylulose 5-phosphate. Glu229 contributes to the Mn(2+) binding site.

It belongs to the DXR family. Mg(2+) serves as cofactor. The cofactor is Mn(2+).

The catalysed reaction is 2-C-methyl-D-erythritol 4-phosphate + NADP(+) = 1-deoxy-D-xylulose 5-phosphate + NADPH + H(+). It functions in the pathway isoprenoid biosynthesis; isopentenyl diphosphate biosynthesis via DXP pathway; isopentenyl diphosphate from 1-deoxy-D-xylulose 5-phosphate: step 1/6. Its function is as follows. Catalyzes the NADPH-dependent rearrangement and reduction of 1-deoxy-D-xylulose-5-phosphate (DXP) to 2-C-methyl-D-erythritol 4-phosphate (MEP). The sequence is that of 1-deoxy-D-xylulose 5-phosphate reductoisomerase from Ectopseudomonas mendocina (strain ymp) (Pseudomonas mendocina).